Here is a 190-residue protein sequence, read N- to C-terminus: dCTP deaminase (190 aa).

DCTP is bound at residue 113 to 118 (KSTYAR). Catalysis depends on glutamate 139, which acts as the Proton donor/acceptor. The dCTP site is built by glutamine 158, tyrosine 172, lysine 181, and glutamine 182.

It belongs to the dCTP deaminase family. In terms of assembly, homotrimer.

The catalysed reaction is dCTP + H2O + H(+) = dUTP + NH4(+). The protein operates within pyrimidine metabolism; dUMP biosynthesis; dUMP from dCTP (dUTP route): step 1/2. Its function is as follows. Catalyzes the deamination of dCTP to dUTP. This chain is dCTP deaminase, found in Chlamydia muridarum (strain MoPn / Nigg).